The chain runs to 538 residues: MSLVFDEYGNPFIVIRDQQAKERLRGIEAHRSHILAAKTISNIMKSSLGPKGMDKMMVSQDGEVLVTNDGATILENMQVDNQIAKLMVQLSKSQDDEIGDGTTGVVVLAGSLLEQAEQLIEKGIHPCRIYEGYETACKIATEHLKTISDSIEFSKDNIEPLIKTAMTCLGSKIVNRFHRQMSEIAVKAVISVADLERKDVNLENIKLEGKEGGKLEDTQLVKGIIIDKGISHPQMPKIIKDAKICLLTCPFEPPKPKTKNSIEITKAEDFKVLGEIEQKYFTDMVEKVKATGANLVICQWGFDDEANHLLLQNNLPAVRWVGGLDLEKIAMATGGRIVARFEDVSADKLGRAGLVREVGFGTTQDRYLSIEDCPNTNAVTIFVRGGNKMIVEEAKRSIHDALCVTRNLIRDNRVIYGGGSSEISCGLKISAMADDIASIEQYAVRAFADALDAIPLALAENSGLPSIESLSTVKAMQIKEKNPRLGIDCNHRDTNDMKAQHVFDTLPGKTQQFLLANQVVKMILKIDDIIKMGPGADE.

This sequence belongs to the TCP-1 chaperonin family. As to quaternary structure, heterooligomeric complex of about 850 to 900 kDa that forms two stacked rings, 12 to 16 nm in diameter.

It localises to the cytoplasm. In terms of biological role, molecular chaperone; assists the folding of proteins upon ATP hydrolysis. Known to play a role, in vitro, in the folding of actin and tubulin. This chain is T-complex protein 1 subunit epsilon (cct5), found in Dictyostelium discoideum (Social amoeba).